Reading from the N-terminus, the 448-residue chain is Putative flavin-containing monooxygenase FMO GS-OX-like 10 (448 aa).

18–23 (GAGAAG) serves as a coordination point for FAD. 212 to 217 (GSSVSG) is a binding site for NADP(+).

The protein belongs to the FMO family. FAD is required as a cofactor.

In terms of biological role, catalyzes the conversion of methylthioalkyl glucosinolates of any chain length into methylsulfinylalkyl glucosinolates. The protein is Putative flavin-containing monooxygenase FMO GS-OX-like 10 of Arabidopsis thaliana (Mouse-ear cress).